The following is an 830-amino-acid chain: LKQSKQPLESCRNRCNETFSEELSYCSCDNKCTERKACCWDYQDICVLPTQSWSCNKLRCGEKRMANVLCSCSEDCLTKKDCCTDYKSICKRETSWLKDQCASSSASQCPEGFDQSPLILFSMDGFRAEYLETWDTLMPNINKLKTCGTHAKYMRAVYPTKTFVNHYTIVTGLYAETHGIIDNNMYDVKLNQNFSLSGSNMRNAAWWGGQPIWHTASYQGLKAATYFWPGSEVKINGSYPTIYKVYNKSTPFEARVMEVLKWLDLPKAKRPDFSTLYIEEPDTTGHKFGPVSGQVIKSLQMADRTLGMLMEGLKQRNLHNCVNLILLADHGMEAISCNRLEYMTDYFNTVDFFMYEGAAPRIRSKNVPKDFYTFDSEAIVKKLTCRKPKQHFKAYLAKDLPKRLHFANNIRIDKVNLMVDRQWLAVRNKKYKYCSGGTHGYDNEFKSMEAIFLAHGPGFKEKTEVTSFENIEVYNLMCDLLKLKPAPNNGTHGSLNHLLKNPFYNPSPAKEQSPPLYCLFGPVPSPDVSGCKCSSITDLEAVNQRLNLIDQAKMQSEADNLPYGRPHVLQHSKYCLLHQTKYISAYSQDILMPLWNSYTISKSLVKPTSAPPSASDCLRLDVRIPTVQSQTCSNYQPDLAITPGFLYPPDFSSSGPEQYDALITSNIVPMYKEFARLWNYFHSTLLPKYATERNGLNVISGPIFDYNYDGHFDPYDTIDQYVNNTKIPIPTHYFVVLTSCENSTKTPLNCPPGSLKVLSFILPHRPDNSESCADKSPDNLWVEERMQTHTARVRDVELLTGLDFYSALKQPLSETLRLKTFLPIFINSVN.

SMB domains follow at residues 7–50 (PLES…VLPT) and 51–95 (QSWS…RETS). 16 disulfides stabilise this stretch: C11–C15, C11–C28, C15–C46, C26–C28, C26–C39, C32–C38, C39–C46, C55–C60, C55–C72, C60–C90, C70–C72, C70–C83, C76–C82, C83–C90, C101–C147, and C109–C321. N16 is a glycosylation site (N-linked (GlcNAc...) asparagine). Residues 35-37 (RKA) carry the Cell attachment site motif. A divalent metal cation is bound by residues D124 and T162. T162 serves as the catalytic AMP-threonine intermediate. N193, N236, and N247 each carry an N-linked (GlcNAc...) asparagine glycan. K248 contributes to the AMP binding site. Residues D282, H286, D329, and H330 each coordinate a divalent metal cation. H286 contacts AMP. 6 disulfides stabilise this stretch: C337–C434, C385–C772, C518–C575, C531–C632, C533–C617, and C740–C750. H439 contributes to the a divalent metal cation binding site. N489 carries N-linked (GlcNAc...) asparagine glycosylation. 2 N-linked (GlcNAc...) asparagine glycosylation sites follow: N723 and N742.

It belongs to the nucleotide pyrophosphatase/phosphodiesterase family. Monomer cleaved in two subunits; disulfide-linked. Is synthesized as a single-chain protein and is subsequently cleaved to form a two-subunit protein held together with disulfide bonds. A divalent metal cation serves as cofactor. In terms of tissue distribution, expressed by venom gland.

It is found in the secreted. It carries out the reaction ADP + H2O = AMP + phosphate + H(+). Hydrolyzes ADP with high activity. Shows weak or no activity on 5'-AMP, 5'-GMP, 3'-AMP, ATP, cAMP, and cGMP. Is devoid of monophosphatase and proteinase activities. Dose-dependently inhibits platelet aggregation induced by ADP and collagen. The chain is Venom phosphodiesterase from Naja atra (Chinese cobra).